The primary structure comprises 526 residues: Peptide chain release factor 3 (526 aa).

Positions 9 to 277 constitute a tr-type G domain; sequence DKRRTFAIIS…GIVEWAPKPQ (269 aa). Residues 18–25, 86–90, and 140–143 each bind GTP; these read SHPDAGKT, DTPGH, and NKLD.

This sequence belongs to the TRAFAC class translation factor GTPase superfamily. Classic translation factor GTPase family. PrfC subfamily.

The protein resides in the cytoplasm. In terms of biological role, increases the formation of ribosomal termination complexes and stimulates activities of RF-1 and RF-2. It binds guanine nucleotides and has strong preference for UGA stop codons. It may interact directly with the ribosome. The stimulation of RF-1 and RF-2 is significantly reduced by GTP and GDP, but not by GMP. This Shewanella woodyi (strain ATCC 51908 / MS32) protein is Peptide chain release factor 3.